A 1505-amino-acid polypeptide reads, in one-letter code: Anaphase-promoting complex subunit 1 (1505 aa).

This sequence belongs to the APC1 family. As to quaternary structure, the APC/C complex is probably composed of at least 12 subunits: apc-2, apc-10, apc-11, cdc-26, emb-1, emb-27, emb-30, mat-1, mat-2, mat-3, such-1 and gfi-3.

The protein operates within protein modification; protein ubiquitination. Functionally, probable component of the anaphase promoting complex/cyclosome (APC/C), a cell cycle-regulated E3 ubiquitin ligase that controls progression through mitosis and the G1 phase of the cell cycle. The APC/C complex acts by mediating ubiquitination and subsequent degradation of target proteins. Developmental role in early embryogenesis and the metaphase to anaphase transition in oocyte and spermatocyte meiosis and mitosis in germ cells. Required for embryonic anterior-posterior axis formation. Plays a role in regulating the abundance of glr-1 receptors in postmitotic neurons, which may in turn control animal locomotion. Involved in regulating GABA neurotransmitter release at neuromuscular junctions in GABA motor neurons. This Caenorhabditis elegans protein is Anaphase-promoting complex subunit 1.